The primary structure comprises 253 residues: 3-deoxy-manno-octulosonate cytidylyltransferase (253 aa).

This sequence belongs to the KdsB family.

It localises to the cytoplasm. The catalysed reaction is 3-deoxy-alpha-D-manno-oct-2-ulosonate + CTP = CMP-3-deoxy-beta-D-manno-octulosonate + diphosphate. It functions in the pathway nucleotide-sugar biosynthesis; CMP-3-deoxy-D-manno-octulosonate biosynthesis; CMP-3-deoxy-D-manno-octulosonate from 3-deoxy-D-manno-octulosonate and CTP: step 1/1. It participates in bacterial outer membrane biogenesis; lipopolysaccharide biosynthesis. Its function is as follows. Activates KDO (a required 8-carbon sugar) for incorporation into bacterial lipopolysaccharide in Gram-negative bacteria. This chain is 3-deoxy-manno-octulosonate cytidylyltransferase, found in Proteus mirabilis (strain HI4320).